We begin with the raw amino-acid sequence, 394 residues long: S-adenosylmethionine synthase 2 (394 aa).

Glutamate 11 is a Mg(2+) binding site. ATP is bound at residue histidine 17. Glutamate 45 is a K(+) binding site. Residues glutamate 58 and glutamine 101 each coordinate L-methionine. Residues 169–171 (DGK), 237–240 (SGRF), aspartate 248, 254–255 (RK), alanine 271, lysine 275, and lysine 279 each bind ATP. Aspartate 248 contributes to the L-methionine binding site. L-methionine is bound at residue lysine 279.

This sequence belongs to the AdoMet synthase family. Homotetramer. The cofactor is Mn(2+). Requires Mg(2+) as cofactor. Co(2+) is required as a cofactor. K(+) serves as cofactor.

It localises to the cytoplasm. The enzyme catalyses L-methionine + ATP + H2O = S-adenosyl-L-methionine + phosphate + diphosphate. Its pathway is amino-acid biosynthesis; S-adenosyl-L-methionine biosynthesis; S-adenosyl-L-methionine from L-methionine: step 1/1. Catalyzes the formation of S-adenosylmethionine from methionine and ATP. The reaction comprises two steps that are both catalyzed by the same enzyme: formation of S-adenosylmethionine (AdoMet) and triphosphate, and subsequent hydrolysis of the triphosphate. The sequence is that of S-adenosylmethionine synthase 2 (SAM2) from Oryza sativa subsp. japonica (Rice).